Reading from the N-terminus, the 335-residue chain is MGKNIKVSFKHVSKEYDLYQNKSDKIKGLFMPKSQKMQSFWALRDVSFDIHDGETVGLIGINGSGKSTISSIMSGVIPPTQGEVIINGETSLIAIAVGLKGPLTGYENIRLKLLMHGMKSSQINKLMPSIIEFADIGDFINQPIKNYSSGMRSRLGFAISVHTNPDILVIDEALSVGDQTFYEKCVDKINEFKARGKTIVFVSHSLGQVKSLCDRIIWMHHGEIREMGTAQEVAQKYDEFVKWFNKQPNDYKKKYQKEHKENQKAPQKKIYPNPNANKYRLTLFDKIFLTVLIALTILFGTLVATGKSFKGLISEESTTQIEKVVHVDNYDLKLN.

One can recognise an ABC transporter domain in the interval 26–246; sequence IKGLFMPKSQ…YDEFVKWFNK (221 aa). Residue 60-67 coordinates ATP; the sequence is GINGSGKS.

This sequence belongs to the ABC transporter superfamily. Teichoic acids exporter (TC 3.A.1.104.1) family. As to quaternary structure, the complex is composed of two ATP-binding proteins (TagH) and two transmembrane proteins (TagG).

The protein localises to the cell membrane. The catalysed reaction is ATP + H2O + teichoic acidSide 1 = ADP + phosphate + teichoic acidSide 2.. In terms of biological role, part of the ABC transporter complex TagGH involved in teichoic acids export. Responsible for energy coupling to the transport system. In Listeria monocytogenes serotype 4b (strain F2365), this protein is Teichoic acids export ATP-binding protein TagH.